We begin with the raw amino-acid sequence, 401 residues long: O-methyltransferase mfmE (401 aa).

Residues 243–244 and D268 contribute to the S-adenosyl-L-methionine site; that span reads GG. The active-site Proton acceptor is the H308.

The protein belongs to the class I-like SAM-binding methyltransferase superfamily. Cation-independent O-methyltransferase family. COMT subfamily.

It participates in secondary metabolite biosynthesis; terpenoid biosynthesis. Functionally, O-methyltransferase; part of the gene cluster that mediates the biosynthesis of the phthalide-terpenoid hybrid 11'-O-desmethylfendlerol. Within the pathway, mfmE catalyzes the 7-O-methylation of the phthalide 5,7-dihydroxy-4-(hydroxymethyl)-6-methylphthalide to yield 5-hydroxy-4-(hydroxymethyl)-7-methoxy-6-methylphthalide. The biosynthesis of 11'-O-desmethylfendlerol begins with the NR-PKS mfmB that forms 3,5-dimethylorsellinic acid (DMOA), which is then transformed into the phthalide 5,7-dihydroxy-4-(hydroxymethyl)-6-methylphthalide by the cytochrome P450 monooxygenase mfmA and the hydrolase mfmC. Subsequently, the methyltransferase mfmE catalyzes 7-O-methylation to yield 5-hydroxy-4-(hydroxymethyl)-7-methoxy-6-methylphthalide, which undergoes C-3 hydroxylation by the cytochrome P450 monooxygenase mfmF. The resultant cyclopolic acid (2,5-dihydroxy-4-(hydroxymethyl)-7-methoxy-6-methylphthalide) is then farnesylated by the DMATS-type prenyltransferase mfmD to afford 5-O-farnesylcyclopolic acid. Finally, the Pyr4-family terpene cyclase mfmH cyclizes the farnesyl moiety of 5-O-farnesylcyclopolic acid into a drimane-like structure, thus completing the biosynthesis of 11'-O-desmethylfendlerol. This chain is O-methyltransferase mfmE, found in Annulohypoxylon moriforme (Filamentous fungus).